Here is a 184-residue protein sequence, read N- to C-terminus: ATP synthase subunit b, chloroplastic (184 aa).

Residues 27–49 (LATNPINLSVVLGVLIFFGKGVL) form a helical membrane-spanning segment.

It belongs to the ATPase B chain family. In terms of assembly, F-type ATPases have 2 components, F(1) - the catalytic core - and F(0) - the membrane proton channel. F(1) has five subunits: alpha(3), beta(3), gamma(1), delta(1), epsilon(1). F(0) has four main subunits: a(1), b(1), b'(1) and c(10-14). The alpha and beta chains form an alternating ring which encloses part of the gamma chain. F(1) is attached to F(0) by a central stalk formed by the gamma and epsilon chains, while a peripheral stalk is formed by the delta, b and b' chains.

The protein localises to the plastid. The protein resides in the chloroplast thylakoid membrane. Functionally, f(1)F(0) ATP synthase produces ATP from ADP in the presence of a proton or sodium gradient. F-type ATPases consist of two structural domains, F(1) containing the extramembraneous catalytic core and F(0) containing the membrane proton channel, linked together by a central stalk and a peripheral stalk. During catalysis, ATP synthesis in the catalytic domain of F(1) is coupled via a rotary mechanism of the central stalk subunits to proton translocation. Component of the F(0) channel, it forms part of the peripheral stalk, linking F(1) to F(0). The protein is ATP synthase subunit b, chloroplastic of Cuscuta exaltata (Tall dodder).